The following is a 68-amino-acid chain: uncharacterized protein (68 aa).

The segment at 1–20 (MYKQKKKNHPFQCKKKKKKK) is disordered. Residues 27–44 (IKLLFNYFLFFNFIITTF) form a helical membrane-spanning segment.

The protein localises to the membrane. This is an uncharacterized protein from Dictyostelium discoideum (Social amoeba).